The following is an 819-amino-acid chain: DNA replication licensing factor Mcm3 (819 aa).

The region spanning 290–496 (IFELLSKSLA…DVDQMISDHV (207 aa)) is the MCM domain. ADP-binding residues include Gln348, Leu388, Glu389, Ala390, and Ala392. Residues 472-475 (SRFD) carry the Arginine finger motif. Ser522 carries the post-translational modification Phosphoserine. Residue Tyr538 is modified to Phosphotyrosine. The interval 655 to 717 (DRPSKRRRNS…DAGDLTRRET (63 aa)) is disordered. Ser664, Ser666, Ser680, and Ser682 each carry phosphoserine. Residues Thr690 and Thr692 each carry the phosphothreonine modification. Residues Ser697, Ser735, and Ser739 each carry the phosphoserine modification.

The protein belongs to the MCM family. Component of the Mcm2-7 complex. The complex forms a toroidal hexameric ring with the proposed subunit order Mcm2-Mcm6-Mcm4-Mcm7-Mcm3-Mcm5.

The protein localises to the nucleus. The protein resides in the chromosome. The catalysed reaction is ATP + H2O = ADP + phosphate + H(+). Its function is as follows. Acts as a component of the Mcm2-7 complex (Mcm complex) (Mcm complex) which is the putative replicative helicase essential for 'once per cell cycle' DNA replication initiation and elongation in eukaryotic cells. Core component of CDC45-MCM-GINS (CMG) helicase, the molecular machine that unwinds template DNA during replication, and around which the replisome is built. The active ATPase sites in the Mcm2-7 ring are formed through the interaction surfaces of two neighboring subunits such that a critical structure of a conserved arginine finger motif is provided in trans relative to the ATP-binding site of the Walker A box of the adjacent subunit. The six ATPase active sites, however, are likely to contribute differentially to the complex helicase activity. This chain is DNA replication licensing factor Mcm3 (Mcm3), found in Drosophila melanogaster (Fruit fly).